Reading from the N-terminus, the 552-residue chain is Glutamate--tRNA ligase (552 aa).

The short motif at 41 to 51 (PSPTGFQHIGG) is the 'HIGH' region element. The 'KMSKS' region signature appears at 293 to 297 (KLSKR). An ATP-binding site is contributed by Lys296.

Belongs to the class-I aminoacyl-tRNA synthetase family. Glutamate--tRNA ligase type 1 subfamily. As to quaternary structure, monomer.

The protein resides in the cytoplasm. The enzyme catalyses tRNA(Glu) + L-glutamate + ATP = L-glutamyl-tRNA(Glu) + AMP + diphosphate. Its function is as follows. Catalyzes the attachment of glutamate to tRNA(Glu) in a two-step reaction: glutamate is first activated by ATP to form Glu-AMP and then transferred to the acceptor end of tRNA(Glu). The protein is Glutamate--tRNA ligase of Clostridium perfringens (strain SM101 / Type A).